A 179-amino-acid chain; its full sequence is Large ribosomal subunit protein uL5 (179 aa).

It belongs to the universal ribosomal protein uL5 family. Part of the 50S ribosomal subunit; part of the 5S rRNA/L5/L18/L25 subcomplex. Contacts the 5S rRNA and the P site tRNA. Forms a bridge to the 30S subunit in the 70S ribosome.

This is one of the proteins that bind and probably mediate the attachment of the 5S RNA into the large ribosomal subunit, where it forms part of the central protuberance. In the 70S ribosome it contacts protein S13 of the 30S subunit (bridge B1b), connecting the 2 subunits; this bridge is implicated in subunit movement. Contacts the P site tRNA; the 5S rRNA and some of its associated proteins might help stabilize positioning of ribosome-bound tRNAs. The polypeptide is Large ribosomal subunit protein uL5 (Thermoanaerobacter sp. (strain X514)).